Here is a 1414-residue protein sequence, read N- to C-terminus: DNA-directed RNA polymerase subunit beta' (1414 aa).

Residues C70, C72, C85, and C88 each coordinate Zn(2+). Residues D460, D462, and D464 each coordinate Mg(2+). Residues C815, C889, C896, and C899 each coordinate Zn(2+). The tract at residues 1395–1414 (EAEAQFADVSSTPDSDTDAS) is disordered.

This sequence belongs to the RNA polymerase beta' chain family. The RNAP catalytic core consists of 2 alpha, 1 beta, 1 beta' and 1 omega subunit. When a sigma factor is associated with the core the holoenzyme is formed, which can initiate transcription. Mg(2+) serves as cofactor. Zn(2+) is required as a cofactor.

It carries out the reaction RNA(n) + a ribonucleoside 5'-triphosphate = RNA(n+1) + diphosphate. Functionally, DNA-dependent RNA polymerase catalyzes the transcription of DNA into RNA using the four ribonucleoside triphosphates as substrates. This is DNA-directed RNA polymerase subunit beta' from Janthinobacterium sp. (strain Marseille) (Minibacterium massiliensis).